The sequence spans 333 residues: Ribosomal RNA small subunit methyltransferase H (333 aa).

S-adenosyl-L-methionine-binding positions include 42 to 44 (GGH), D62, F86, D105, and Q112.

The protein belongs to the methyltransferase superfamily. RsmH family.

It is found in the cytoplasm. It carries out the reaction cytidine(1402) in 16S rRNA + S-adenosyl-L-methionine = N(4)-methylcytidine(1402) in 16S rRNA + S-adenosyl-L-homocysteine + H(+). Functionally, specifically methylates the N4 position of cytidine in position 1402 (C1402) of 16S rRNA. This Cupriavidus necator (strain ATCC 17699 / DSM 428 / KCTC 22496 / NCIMB 10442 / H16 / Stanier 337) (Ralstonia eutropha) protein is Ribosomal RNA small subunit methyltransferase H.